The primary structure comprises 164 residues: Vasopressin-neurophysin 2-copeptin (164 aa).

The first 19 residues, 1–19 (MPDTMLPACFLGLLAFSSA), serve as a signal peptide directing secretion. Cysteine 20 and cysteine 25 are oxidised to a cystine. A Glycine amide modification is found at glycine 28. 7 cysteine pairs are disulfide-bonded: cysteine 41-cysteine 85, cysteine 44-cysteine 58, cysteine 52-cysteine 75, cysteine 59-cysteine 65, cysteine 92-cysteine 104, cysteine 98-cysteine 116, and cysteine 105-cysteine 110. Asparagine 131 carries N-linked (GlcNAc...) asparagine glycosylation.

It belongs to the vasopressin/oxytocin family. As to quaternary structure, interacts with vasopressin receptors V1bR/AVPR1B (Ki=85 pM), V1aR/AVPR1A (Ki=0.6 nM) and V2R/AVPR2 (Ki=4.9 nM). Interacts with oxytocin receptor (OXTR) (Ki=110 nM). (Microbial infection) May interact with SARS coronavirus-2/SARS-CoV-2; they may form a complex with secreted ACE2.

It localises to the secreted. Functionally, specifically binds vasopressin. Its function is as follows. Has a direct antidiuretic action on the kidney, it also causes vasoconstriction of the peripheral vessels. Acts by binding to vasopressin receptors (V1bR/AVPR1B, V1aR/AVPR1A, and V2R/AVPR2). The polypeptide is Vasopressin-neurophysin 2-copeptin (AVP) (Homo sapiens (Human)).